Consider the following 143-residue polypeptide: Transcriptional regulator MraZ (143 aa).

SpoVT-AbrB domains are found at residues 5–47 and 76–119; these read EYRH…PQSE and ASEC…SKTL.

Belongs to the MraZ family. Forms oligomers.

The protein resides in the cytoplasm. It is found in the nucleoid. The protein is Transcriptional regulator MraZ of Shouchella clausii (strain KSM-K16) (Alkalihalobacillus clausii).